We begin with the raw amino-acid sequence, 340 residues long: Putative Ig-like domain-containing protein C1 (340 aa).

The 88-residue stretch at 207–294 (PTVTVTGIER…SSPRVMVPTI (88 aa)) folds into the Ig-like domain.

This Sus scrofa (Pig) protein is Putative Ig-like domain-containing protein C1.